The following is a 360-amino-acid chain: Histidinol-phosphate aminotransferase (360 aa).

Lys-222 is modified (N6-(pyridoxal phosphate)lysine).

Belongs to the class-II pyridoxal-phosphate-dependent aminotransferase family. Histidinol-phosphate aminotransferase subfamily. As to quaternary structure, homodimer. Requires pyridoxal 5'-phosphate as cofactor.

The enzyme catalyses L-histidinol phosphate + 2-oxoglutarate = 3-(imidazol-4-yl)-2-oxopropyl phosphate + L-glutamate. It participates in amino-acid biosynthesis; L-histidine biosynthesis; L-histidine from 5-phospho-alpha-D-ribose 1-diphosphate: step 7/9. The sequence is that of Histidinol-phosphate aminotransferase from Listeria innocua serovar 6a (strain ATCC BAA-680 / CLIP 11262).